Consider the following 317-residue polypeptide: MANLGYLLCLLGLLLCGLSSPGMSRPYNHGSERPIIGVVMQECFGKMAKLGNYYIAASYVKYIESAGARVVPIRPDLSDAEYEELFRSINGVLLPGGGANLTDSGYSRVAKIFFSKALESFDNGDHFPVWGTCLGFEELSVLVSGENLLTSTDTKSKKLPLNFTEGARKSRMFKHFPTELLDSLALENLTANFHKWSLSVKNFTENEKLKKFFNILTTNTDGKTEFISSMEGFKYPVYAVQWHPEKAAFEWKNLGGISHAPNAVKTSFYLAEFLVSEARKNSHHFENVVKETASLIYKFNPIYTGNISSFQQAYMFD.

A signal peptide spans 1 to 24; it reads MANLGYLLCLLGLLLCGLSSPGMS. One can recognise a Gamma-glutamyl hydrolase domain in the interval 25 to 317; sequence RPYNHGSERP…SSFQQAYMFD (293 aa). An N-linked (GlcNAc...) (high mannose) asparagine glycan is attached at Asn-100. Cys-133 acts as the Nucleophile in catalysis. N-linked (GlcNAc...) (high mannose) asparagine glycans are attached at residues Asn-162 and Asn-188. The N-linked (GlcNAc...) asparagine glycan is linked to Asn-202. His-243 functions as the Proton donor in the catalytic mechanism. Residue Asn-306 is glycosylated (N-linked (GlcNAc...) asparagine).

The protein belongs to the peptidase C26 family. As to quaternary structure, homodimer. In terms of tissue distribution, isoform I (more expressed than isoform II in all tissues) is highly expressed in salivary gland, followed by kidney, liver, lung, stomach and uterus, and weakly expressed in small intestine, brain and fetal liver. Also expressed at a lower level in thymus, spleen and skeletal muscle. Also expressed in tumors.

The protein resides in the secreted. Its subcellular location is the extracellular space. It localises to the lysosome. It is found in the melanosome. The enzyme catalyses (6S)-5,6,7,8-tetrahydrofolyl-(gamma-L-Glu)(n) + (n-1) H2O = (6S)-5,6,7,8-tetrahydrofolate + (n-1) L-glutamate. Hydrolyzes the polyglutamate sidechains of pteroylpolyglutamates. Progressively removes gamma-glutamyl residues from pteroylpoly-gamma-glutamate to yield pteroyl-alpha-glutamate (folic acid) and free glutamate. May play an important role in the bioavailability of dietary pteroylpolyglutamates and in the metabolism of pteroylpolyglutamates and antifolates. In Mus musculus (Mouse), this protein is Gamma-glutamyl hydrolase (Ggh).